Reading from the N-terminus, the 315-residue chain is Nucleotide-binding protein PsycPRwf_2129 (315 aa).

29-36 serves as a coordination point for ATP; the sequence is GRSGSGKT. Residue 79 to 82 coordinates GTP; the sequence is DIRT.

It belongs to the RapZ-like family.

In terms of biological role, displays ATPase and GTPase activities. The polypeptide is Nucleotide-binding protein PsycPRwf_2129 (Psychrobacter sp. (strain PRwf-1)).